The chain runs to 495 residues: Cobyric acid synthase (495 aa).

The 195-residue stretch at 250–444 (SLKISILRLP…LHGLFDNGAW (195 aa)) folds into the GATase cobBQ-type domain. The active-site Nucleophile is the Cys331. Residue His436 is part of the active site.

The protein belongs to the CobB/CobQ family. CobQ subfamily.

The protein operates within cofactor biosynthesis; adenosylcobalamin biosynthesis. Its function is as follows. Catalyzes amidations at positions B, D, E, and G on adenosylcobyrinic A,C-diamide. NH(2) groups are provided by glutamine, and one molecule of ATP is hydrogenolyzed for each amidation. In Rippkaea orientalis (strain PCC 8801 / RF-1) (Cyanothece sp. (strain PCC 8801)), this protein is Cobyric acid synthase.